Reading from the N-terminus, the 644-residue chain is ATP-dependent zinc metalloprotease FtsH (644 aa).

Topologically, residues Met-1–Asn-11 are stromal. A helical membrane pass occupies residues Leu-12–Ile-32. Topologically, residues Gly-33 to Asn-128 are lumenal. A helical membrane pass occupies residues Ile-129–Tyr-149. Residues Leu-150 to Asn-644 are Stromal-facing. Gly-226 to Thr-233 serves as a coordination point for ATP. His-447 serves as a coordination point for Zn(2+). The active site involves Glu-448. His-451 and Asp-525 together coordinate Zn(2+).

In the central section; belongs to the AAA ATPase family. It in the C-terminal section; belongs to the peptidase M41 family. Homohexamer. Zn(2+) is required as a cofactor.

The protein resides in the plastid. Its subcellular location is the chloroplast thylakoid membrane. Functionally, acts as a processive, ATP-dependent zinc metallopeptidase. This Trieres chinensis (Marine centric diatom) protein is ATP-dependent zinc metalloprotease FtsH.